A 224-amino-acid chain; its full sequence is MNLRLCSCCRHNGIVSEQGYEYCIFCESVFQKCTKVQKKSNFHVSNKLIHLRNVLRRLLSHQCSGEIISELLDIMEKNQISTDDVDANFVSSFLKANERINKKDYKLVFEIINQVKDEKLNLSTEKINEVVEIFKHLVFFCQENTPSKTINYSFFLDKIFDITSVTKNLKPQTVKNYTKNNSNQLVWENFLAHMRSKKRVTMVEDYGHEYVFVDERFSTCSLEV.

The protein belongs to the orthopoxvirus VLTF-3/OPG127 family. In terms of assembly, interacts with the late transcription elongation factor VLTF-4/OPG110. Interacts with the late transcription factors VLTF-1/OPG093.

Its function is as follows. Acts with RNA polymerase to initiate transcription from late gene promoters. The chain is Viral late gene transcription factor 3 (OPG127) from Monkeypox virus.